Consider the following 437-residue polypeptide: Magnetosome protein MamN (437 aa).

Transmembrane regions (helical) follow at residues 26-46 (LAVLAGAAALVVIGTISGSYT), 53-73 (SVYFETLALIFGMAAISALLA), 95-115 (WILVMMALVTYGISLASNSLV), 136-156 (VPVIIAEIIAANLGGASTMIG), 174-194 (FIAGMMPVCLILLAVMLVFFE), 226-246 (LLSYGLIIFGVTVAGLILAGP), 252-268 (GWIAFVAGVTALGLGRF), 281-301 (DILFYGGLFVMVGALTSVGIL), 320-340 (AILLMWMAAAVTIFVGGGTSA), 358-378 (AAWWALALGIMAGSVAALPGA), and 416-436 (WGMPLMGIFLVLGTVYIAVLV).

Belongs to the arsenite-antimonite (ArsB) efflux (TC 2.A.45) family.

Its subcellular location is the magnetosome membrane. Plays a role in biomineralization; might regulate pH in the magnetosome. In Paramagnetospirillum magneticum (strain ATCC 700264 / AMB-1) (Magnetospirillum magneticum), this protein is Magnetosome protein MamN (mamN).